Reading from the N-terminus, the 430-residue chain is Tol-Pal system protein TolB (430 aa).

An N-terminal signal peptide occupies residues 1–21 (MKQAFRVALSVLMLFVAVAHA).

This sequence belongs to the TolB family. The Tol-Pal system is composed of five core proteins: the inner membrane proteins TolA, TolQ and TolR, the periplasmic protein TolB and the outer membrane protein Pal. They form a network linking the inner and outer membranes and the peptidoglycan layer.

Its subcellular location is the periplasm. Part of the Tol-Pal system, which plays a role in outer membrane invagination during cell division and is important for maintaining outer membrane integrity. TolB occupies a key intermediary position in the Tol-Pal system because it communicates directly with both membrane-embedded components, Pal in the outer membrane and TolA in the inner membrane. The chain is Tol-Pal system protein TolB from Erwinia tasmaniensis (strain DSM 17950 / CFBP 7177 / CIP 109463 / NCPPB 4357 / Et1/99).